A 494-amino-acid polypeptide reads, in one-letter code: NADH-quinone oxidoreductase subunit N 2 (494 aa).

14 helical membrane-spanning segments follow: residues Leu14–Leu34, Ile45–Ala65, Val82–Leu102, Ile116–Thr136, Leu139–Phe159, Phe174–Val194, Leu214–Phe234, Phe262–Trp282, Trp289–Leu309, Leu317–Thr337, Leu344–Ile364, Ala388–Ala408, Ala422–Tyr442, and Ile470–Met490.

It belongs to the complex I subunit 2 family. As to quaternary structure, NDH-1 is composed of 14 different subunits. Subunits NuoA, H, J, K, L, M, N constitute the membrane sector of the complex.

The protein resides in the cell inner membrane. The enzyme catalyses a quinone + NADH + 5 H(+)(in) = a quinol + NAD(+) + 4 H(+)(out). NDH-1 shuttles electrons from NADH, via FMN and iron-sulfur (Fe-S) centers, to quinones in the respiratory chain. The immediate electron acceptor for the enzyme in this species is believed to be ubiquinone. Couples the redox reaction to proton translocation (for every two electrons transferred, four hydrogen ions are translocated across the cytoplasmic membrane), and thus conserves the redox energy in a proton gradient. In Acidobacterium capsulatum (strain ATCC 51196 / DSM 11244 / BCRC 80197 / JCM 7670 / NBRC 15755 / NCIMB 13165 / 161), this protein is NADH-quinone oxidoreductase subunit N 2.